The chain runs to 157 residues: Small ribosomal subunit protein uS7 (157 aa).

The protein belongs to the universal ribosomal protein uS7 family. As to quaternary structure, part of the 30S ribosomal subunit. Contacts proteins S9 and S11.

In terms of biological role, one of the primary rRNA binding proteins, it binds directly to 16S rRNA where it nucleates assembly of the head domain of the 30S subunit. Is located at the subunit interface close to the decoding center, probably blocks exit of the E-site tRNA. This chain is Small ribosomal subunit protein uS7, found in Protochlamydia amoebophila (strain UWE25).